The sequence spans 121 residues: Putative RNase MJ1216 (121 aa).

Residues arginine 76 and histidine 81 contribute to the active site. Positions 76-83 (RDKLIHQY) match the RX(4)HXY motif motif. Tyrosine 83 carries the O-di-AMP-tyrosine modification.

This sequence belongs to the HepT RNase toxin family. As to quaternary structure, homodimer, probably forms a complex with antitoxin MJ1215 or MJ1217. Post-translationally, modified by antitoxin MJ1215 or MJ1217; probably at least 2 successive AMPylation events occur on Tyr-83.

Probable toxic component of a putative type VII toxin-antitoxin (TA) system, probably an RNase. Probably neutralized by antitoxin MJ1215 or MJ1217. Neutralization may be due to AMPylation by antitoxin. The protein is Putative RNase MJ1216 of Methanocaldococcus jannaschii (strain ATCC 43067 / DSM 2661 / JAL-1 / JCM 10045 / NBRC 100440) (Methanococcus jannaschii).